Here is a 253-residue protein sequence, read N- to C-terminus: Imidazole glycerol phosphate synthase subunit HisF (253 aa).

Catalysis depends on residues Asp11 and Asp130.

The protein belongs to the HisA/HisF family. In terms of assembly, heterodimer of HisH and HisF.

The protein localises to the cytoplasm. It catalyses the reaction 5-[(5-phospho-1-deoxy-D-ribulos-1-ylimino)methylamino]-1-(5-phospho-beta-D-ribosyl)imidazole-4-carboxamide + L-glutamine = D-erythro-1-(imidazol-4-yl)glycerol 3-phosphate + 5-amino-1-(5-phospho-beta-D-ribosyl)imidazole-4-carboxamide + L-glutamate + H(+). Its pathway is amino-acid biosynthesis; L-histidine biosynthesis; L-histidine from 5-phospho-alpha-D-ribose 1-diphosphate: step 5/9. Its function is as follows. IGPS catalyzes the conversion of PRFAR and glutamine to IGP, AICAR and glutamate. The HisF subunit catalyzes the cyclization activity that produces IGP and AICAR from PRFAR using the ammonia provided by the HisH subunit. The sequence is that of Imidazole glycerol phosphate synthase subunit HisF from Clostridium botulinum (strain Langeland / NCTC 10281 / Type F).